The following is a 1480-amino-acid chain: Nonribosomal peptide synthetase inpA (1480 aa).

Residues 1 to 17 (MSHSMSSSSSSSSSSSS) show a composition bias toward low complexity. The interval 1 to 24 (MSHSMSSSSSSSSSSSSSRDEGQS) is disordered. The segment at 44-458 (VQDVYPCTPL…QLISPQDLDQ (415 aa)) is condensation. The interval 479-871 (QRHIDTRPDA…GRKDSQVKIR (393 aa)) is adenylation. The 80-residue stretch at 1003-1082 (DSTNKVALRL…GLAAMITSPH (80 aa)) folds into the Carrier domain. Serine 1041 carries the post-translational modification O-(pantetheine 4'-phosphoryl)serine. Positions 1117–1436 (KVFLTGATGL…VLAMLQDPQM (320 aa)) are thioesterase (TE) domain.

The protein belongs to the NRP synthetase family.

It functions in the pathway secondary metabolite biosynthesis. Nonribosomal peptide synthetase; part of the inp gene cluster that mediates the biosynthesis of fellutamide B, a mycotoxin that acts as a proteasome inhibitor. In the first step of fellutabmide B biosynthesis, inpC activates 3-hydroxydodecanoic acid to generate 3-hydroxydodecanoyl-AMP that is then loaded onto the T0 domain of inpB. The 3-hydroxydodecanoyl-S-phosphopantetheinyl-T0 is sequentially extended with L-Asn and L-Gln by the two CAT modules of inpB. The linear lipodipeptide from inpB is then transferred onto inpA for the addition of the third amino acid, L-Leu. Reductive releasing of the lipotripeptide by the TE domain of inpA produces (2S)-fellutamide B. InpF might be involved in the release and transfer of the lipodipeptide from inpB to inpA. The inp cluster-encoded proteasome subunit inpE confers resistance to internally produced fellutamides. The MFS efflux transporter inpD may contribute to fellutamide resistance as well. In Emericella nidulans (strain FGSC A4 / ATCC 38163 / CBS 112.46 / NRRL 194 / M139) (Aspergillus nidulans), this protein is Nonribosomal peptide synthetase inpA.